Here is a 719-residue protein sequence, read N- to C-terminus: MGNGESQLSSVPAQKLGWFIQEYLKPYEECQTLIDEMVNTICDVLQEPEQFPLVQGVAIGGSYGRKTVLRGNSDGTLVLFFSDLKQFQDQKRSQRDILDKTGDKLKFCLFTKWLKNNFEIQKSLDGFTIQVFTKNQRISFEVLAAFNALSLNDNPSPWIYRELKRSLDKTNASPGEFAVCFTELQQKFFDNRPGKLKDLILLIKHWHQQCQKKIKDLPSLSPYALELLTVYAWEQGCRKDNFDIAEGVRTVLELIKCQEKLCIYWMVNYNFEDETIRNILLHQLQSARPVILDPVDPTNNVSGDKICWQWLKKEAQTWLTSPNLDNELPAPSWNVLPAPLFTTPGHLLDKFIKEFLQPNKCFLEQIDSAVNIIRTFLKENCFRQSTAKIQIVRGGSTAKGTALKTGSDADLVVFHNSLKSYTSQKNERHKIVKEIHEQLKAFWREKEEELEVSFEPPKWKAPRVLSFSLKSKVLNESVSFDVLPAFNALGQLSSGSTPSPEVYAGLIDLYKSSDLPGGEFSTCFTVLQRNFIRSRPTKLKDLIRLVKHWYKECERKLKPKGSLPPKYALELLTIYAWEQGSGVPDFDTAEGFRTVLELVTQYQQLCIFWKVNYNFEDETVRKFLLSQLQKTRPVILDPAEPTGDVGGGDRWCWHLLAKEAKEWLSSPCFKDGTGNPIPPWKVPTMQTPGSCGARIHPIVNEMFSSRSHRILNNNSKRNF.

Residue G2 is the site of N-myristoyl glycine attachment. 2 OAS domain regions span residues 11-335 (VPAQ…SWNV) and 343-683 (TPGH…WKVP). The residue at position 378 (K378) is an N6-acetyllysine. Residue S396 coordinates ATP. Mg(2+)-binding residues include D408, D410, and D481. ATP is bound by residues R544 and K547.

Belongs to the 2-5A synthase family. Homodimer. The cofactor is Mg(2+). Post-translationally, myristoylation is not essential for its activity. In terms of processing, glycosylated. Glycosylation is essential for its activity.

The protein resides in the cytoplasm. The protein localises to the perinuclear region. It catalyses the reaction 3 ATP = 5'-triphosphoadenylyl-(2'-&gt;5')-adenylyl-(2'-&gt;5')-adenosine + 2 diphosphate. Its activity is regulated as follows. Produced as a latent enzyme which is activated by double stranded RNA (dsRNA) generated during the course of viral infection. The dsRNA activator must be at least 15 nucleotides long, and no modification of the 2'-hydroxyl group is tolerated. ssRNA or dsDNA do not act as activators. Strongly inhibited by copper, iron and zinc ions. Partially inhibited by cobalt and nickel ions. Its function is as follows. Interferon-induced, dsRNA-activated antiviral enzyme which plays a critical role in cellular innate antiviral response. Activated by detection of double stranded RNA (dsRNA): polymerizes higher oligomers of 2'-5'-oligoadenylates (2-5A) from ATP which then bind to the inactive monomeric form of ribonuclease L (RNASEL) leading to its dimerization and subsequent activation. Activation of RNASEL leads to degradation of cellular as well as viral RNA, resulting in the inhibition of protein synthesis, thus terminating viral replication. Can mediate the antiviral effect via the classical RNASEL-dependent pathway or an alternative antiviral pathway independent of RNASEL. In addition, it may also play a role in other cellular processes such as apoptosis, cell growth, differentiation and gene regulation. May act as a negative regulator of lactation, stopping lactation in virally infected mammary gland lobules, thereby preventing transmission of viruses to neonates. Non-infected lobules would not be affected, allowing efficient pup feeding during infection. The chain is 2'-5'-oligoadenylate synthase 2 from Homo sapiens (Human).